The sequence spans 218 residues: Thiopurine S-methyltransferase (218 aa).

The S-adenosyl-L-methionine site is built by tryptophan 10, leucine 45, glutamate 66, and arginine 123.

This sequence belongs to the class I-like SAM-binding methyltransferase superfamily. TPMT family.

The protein localises to the cytoplasm. It catalyses the reaction S-adenosyl-L-methionine + a thiopurine = S-adenosyl-L-homocysteine + a thiopurine S-methylether.. The chain is Thiopurine S-methyltransferase from Shewanella baltica (strain OS195).